Consider the following 206-residue polypeptide: Nucleoside triphosphate pyrophosphatase (206 aa).

Aspartate 76 functions as the Proton acceptor in the catalytic mechanism.

Belongs to the Maf family. Requires a divalent metal cation as cofactor.

The protein localises to the cytoplasm. The enzyme catalyses a ribonucleoside 5'-triphosphate + H2O = a ribonucleoside 5'-phosphate + diphosphate + H(+). It carries out the reaction a 2'-deoxyribonucleoside 5'-triphosphate + H2O = a 2'-deoxyribonucleoside 5'-phosphate + diphosphate + H(+). In terms of biological role, nucleoside triphosphate pyrophosphatase. May have a dual role in cell division arrest and in preventing the incorporation of modified nucleotides into cellular nucleic acids. The polypeptide is Nucleoside triphosphate pyrophosphatase (Streptomyces coelicolor (strain ATCC BAA-471 / A3(2) / M145)).